The following is a 244-amino-acid chain: Tetraspanin-7 (244 aa).

Topologically, residues 1 to 11 are cytoplasmic; sequence METKPVITCLK. The chain crosses the membrane as a helical span at residues 12–35; the sequence is TLLIIYSFVFWITGVILLAVGVWG. At 36 to 51 the chain is on the extracellular side; that stretch reads KLTLGTYISLIAENST. Asn49 carries an N-linked (GlcNAc...) asparagine glycan. The chain crosses the membrane as a helical span at residues 52 to 70; the sequence is NAPYVLIGTGTTIVVFGLF. Topologically, residues 71-81 are cytoplasmic; that stretch reads GCFATCRGSPW. Residues 82–107 form a helical membrane-spanning segment; sequence MLKLYAMFLSLVFLAELVAGISGFVF. Residues 108 to 208 lie on the Extracellular side of the membrane; it reads RHEIKDTFLR…LVTSFMETNM (101 aa). 4 N-linked (GlcNAc...) asparagine glycosylation sites follow: Asn150, Asn153, Asn172, and Asn183. The helical transmembrane segment at 209 to 229 threads the bilayer; sequence GIIAGVAFGIAFSQLIGMLLA. Topologically, residues 230-244 are cytoplasmic; that stretch reads CCLSRFITANQYEMV.

The protein belongs to the tetraspanin (TM4SF) family.

Its subcellular location is the membrane. Functionally, may be involved in cell proliferation and cell motility. This chain is Tetraspanin-7 (TSPAN7), found in Pan troglodytes (Chimpanzee).